Consider the following 168-residue polypeptide: Diphosphoinositol polyphosphate phosphohydrolase 1 (168 aa).

The residue at position 1 (Met1) is an N-acetylmethionine. Substrate is bound by residues Arg10, 18 to 20 (KKR), and 39 to 41 (SSR). The Nudix hydrolase domain maps to 17-142 (YKKRAACLCF…KPVQASYFEA (126 aa)). Gly50 and Glu66 together coordinate Mg(2+). Residues 51-72 (GGMEPEEEPSVAAVREVCEEAG) carry the Nudix box motif. Glu69 (proton acceptor) is an active-site residue. Glu70 contacts Mg(2+). Substrate is bound by residues 89–91 (RKH), Arg115, and Lys133.

This sequence belongs to the Nudix hydrolase family. DIPP subfamily. In terms of assembly, monomer. It depends on Mg(2+) as a cofactor. The cofactor is Mn(2+). Requires Zn(2+) as cofactor.

Its subcellular location is the cytoplasm. The protein resides in the nucleus. The enzyme catalyses diphospho-myo-inositol polyphosphate + H2O = myo-inositol polyphosphate + phosphate.. It catalyses the reaction 5-diphospho-1D-myo-inositol 1,2,3,4,6-pentakisphosphate + H2O = 1D-myo-inositol hexakisphosphate + phosphate + H(+). The catalysed reaction is 3,5-bis(diphospho)-1D-myo-inositol 1,2,4,6-tetrakisphosphate + H2O = 3-diphospho-1D-myo-inositol 1,2,4,5,6-pentakisphosphate + phosphate + 2 H(+). It carries out the reaction [phosphate](n+1) + n H2O = (n+1) phosphate + n H(+). The enzyme catalyses P(1),P(5)-bis(5'-adenosyl) pentaphosphate + H2O = ADP + ATP + 2 H(+). It catalyses the reaction P(1),P(6)-bis(5'-adenosyl) hexaphosphate + H2O = 2 ATP + 2 H(+). The catalysed reaction is P(1),P(4)-bis(5'-adenosyl) tetraphosphate + H2O = AMP + ATP + 2 H(+). It carries out the reaction a 5'-end (N(7)-methyl 5'-triphosphoguanosine)-ribonucleoside in mRNA + H2O = N(7)-methyl-GMP + a 5'-end diphospho-ribonucleoside in mRNA + 2 H(+). The enzyme catalyses a 5'-end (N(7)-methyl 5'-triphosphoguanosine)-ribonucleoside in mRNA + H2O = N(7)-methyl-GDP + a 5'-end phospho-ribonucleoside in mRNA + 2 H(+). Diphosphoinositol polyphosphate phosphohydrolase is inhibited by fluoride and InsP6. Functionally, cleaves a beta-phosphate from the diphosphate groups in PP-InsP5 (diphosphoinositol pentakisphosphate) and [PP]2-InsP4 (bisdiphosphoinositol tetrakisphosphate), suggesting that it may play a role in signal transduction. InsP6 (inositol hexakisphosphate) is not a substrate. Acts as a negative regulator of the ERK1/2 pathway. Also able to catalyze the hydrolysis of dinucleoside oligophosphates, with diadenosine 5',5'''-P1,P6-hexaphosphate (Ap6A) and diadenosine 5',5'''- P1,P5-pentaphosphate (Ap5A) being the preferred substrates. The major reaction products are ADP and p4a from Ap6A and ADP and ATP from Ap5A. Also able to hydrolyze 5- phosphoribose 1-diphosphate. Acts as a decapping enzyme that can hydrolyze both monomethylated and unmethylated capped RNAs. Hydrolyzes monomethylated capped RNA after both the alpha- and beta-phosphates generating m7GMP + ppRNA and m7GDP + pRNA. Modulates the stability of a subset of mRNAs implicated in cell motility. Divalent cations zinc, magnesium and manganese determine its substrate specificity. Exhibits endopolyphosphatase activity in the presence of zinc ions. Exhibits diphosphoinositol polyphosphate phosphohydrolase in the presence of magnesium ions and diadenosine hexaphosphate hydrolase activity in the presence of manganese ions. Plays an important role in limiting DNA damage and maintaining cell survival upon oxidative stress via its endopolyphosphatase activity. This Rattus norvegicus (Rat) protein is Diphosphoinositol polyphosphate phosphohydrolase 1.